The following is a 263-amino-acid chain: uncharacterized protein (263 aa).

31–38 provides a ligand contact to ATP; sequence GPTGSGKT.

Belongs to the CbbQ/NirQ/NorQ/GpvN family.

This is an uncharacterized protein from Staphylococcus haemolyticus (strain JCSC1435).